We begin with the raw amino-acid sequence, 457 residues long: MPNEQLRRMDAFTFPSYSFDLSTGEALFDYALTGPDGEQRFTEVITLPLPASPPSDERVATLGRVLELLHVIAGVSYYKTAAPHRLVLPAPLGPSAVALVTAVYTKGLAEYAYRNALPHVLRLRPEVPSGEVTPPVGYDTDGRRPLSAVGGGKDSIVSLEALRRDGLDPLPFSVNPNRVIEAVNVASGLPALAARRRIDPVLFDLNAAGALNGHIPVTAINSLIAVATSVLNGLGPVVMSNERSASDPNLIWDGHQINHQWSKGVEAEGLLRGALEEHAGLTDPYFSLLRQLSELHIARTFARIGGYDDVVTSCNAAFKLRGASDRWCRDCPKCRFVFLALAPFMPRERITRVFGGDLLADPAQLPGYRELLGVDGHKPFECVGEVEESVVALSLLGEQSGWRDAPVVSALIDAVPETAWKTAATSAVFTPGGPSFTPTRYADALGSLTEPARNLPG.

It belongs to the MurL family.

The catalysed reaction is UDP-N-acetyl-alpha-D-muramoyl-L-alanyl-L-glutamate + ATP + H2O = UDP-N-acetyl-alpha-D-muramoyl-L-alanyl-D-glutamate + AMP + diphosphate + H(+). It functions in the pathway cell wall biogenesis; peptidoglycan biosynthesis. In terms of biological role, cell wall formation. Catalyzes epimerization of the terminal L-glutamate in UDP-N-acetyl-alpha-D-muramoyl-L-alanyl-L-glutamate. The protein is UDP-N-acetyl-alpha-D-muramoyl-L-alanyl-L-glutamate epimerase of Salinispora tropica (strain ATCC BAA-916 / DSM 44818 / JCM 13857 / NBRC 105044 / CNB-440).